The sequence spans 360 residues: Photosystem II protein D1 (360 aa).

The next 3 membrane-spanning stretches (helical) occupy residues 29–46, 118–133, and 142–156; these read YIGW…TATT, HFLL…EWEL, and WIFV…AASA. Residue H118 coordinates chlorophyll a. Y126 is a pheophytin a binding site. Residues D170 and E189 each contribute to the [CaMn4O5] cluster site. A helical membrane pass occupies residues 197-218; it reads FHMAGVAGVFGGSLFSAMHGSL. H198 contributes to the chlorophyll a binding site. A quinone is bound by residues H215 and 264–265; that span reads SF. H215 is a Fe cation binding site. H272 is a binding site for Fe cation. A helical membrane pass occupies residues 274-288; it reads FLAAWPVVRIWLTAL. [CaMn4O5] cluster contacts are provided by H332, E333, D342, and A344. Residues 345–360 constitute a propeptide that is removed on maturation; sequence AGEVLPVAVSAPAVHA.

It belongs to the reaction center PufL/M/PsbA/D family. In terms of assembly, PSII is composed of 1 copy each of membrane proteins PsbA, PsbB, PsbC, PsbD, PsbE, PsbF, PsbH, PsbI, PsbJ, PsbK, PsbL, PsbM, PsbT, PsbX, PsbY, PsbZ, Psb30/Ycf12, at least 3 peripheral proteins of the oxygen-evolving complex and a large number of cofactors. It forms dimeric complexes. Requires The D1/D2 heterodimer binds P680, chlorophylls that are the primary electron donor of PSII, and subsequent electron acceptors. It shares a non-heme iron and each subunit binds pheophytin, quinone, additional chlorophylls, carotenoids and lipids. D1 provides most of the ligands for the Mn4-Ca-O5 cluster of the oxygen-evolving complex (OEC). There is also a Cl(-1) ion associated with D1 and D2, which is required for oxygen evolution. The PSII complex binds additional chlorophylls, carotenoids and specific lipids. as cofactor. Post-translationally, tyr-161 forms a radical intermediate that is referred to as redox-active TyrZ, YZ or Y-Z. C-terminally processed by CTPA; processing is essential to allow assembly of the oxygen-evolving complex and thus photosynthetic growth.

It localises to the plastid. The protein resides in the chloroplast thylakoid membrane. The catalysed reaction is 2 a plastoquinone + 4 hnu + 2 H2O = 2 a plastoquinol + O2. Photosystem II (PSII) is a light-driven water:plastoquinone oxidoreductase that uses light energy to abstract electrons from H(2)O, generating O(2) and a proton gradient subsequently used for ATP formation. It consists of a core antenna complex that captures photons, and an electron transfer chain that converts photonic excitation into a charge separation. The D1/D2 (PsbA/PsbD) reaction center heterodimer binds P680, the primary electron donor of PSII as well as several subsequent electron acceptors. This is Photosystem II protein D1 from Bumilleriopsis filiformis (Yellow-green alga).